The chain runs to 252 residues: tRNA (guanine-N(7)-)-methyltransferase (252 aa).

Residues Glu51, Asp76, Asn103, and Asp125 each contribute to the S-adenosyl-L-methionine site. Asp125 is an active-site residue. Substrate contacts are provided by residues Lys129, Asp159, and 199–202 (TYYE).

It belongs to the class I-like SAM-binding methyltransferase superfamily. TrmB family.

It carries out the reaction guanosine(46) in tRNA + S-adenosyl-L-methionine = N(7)-methylguanosine(46) in tRNA + S-adenosyl-L-homocysteine. Its pathway is tRNA modification; N(7)-methylguanine-tRNA biosynthesis. In terms of biological role, catalyzes the formation of N(7)-methylguanine at position 46 (m7G46) in tRNA. The polypeptide is tRNA (guanine-N(7)-)-methyltransferase (Bacteroides thetaiotaomicron (strain ATCC 29148 / DSM 2079 / JCM 5827 / CCUG 10774 / NCTC 10582 / VPI-5482 / E50)).